Consider the following 592-residue polypeptide: V-type ATP synthase alpha chain (592 aa).

233–240 (GPFGSGKT) contributes to the ATP binding site.

Belongs to the ATPase alpha/beta chains family.

The catalysed reaction is ATP + H2O + 4 H(+)(in) = ADP + phosphate + 5 H(+)(out). Its function is as follows. Produces ATP from ADP in the presence of a proton gradient across the membrane. The V-type alpha chain is a catalytic subunit. This chain is V-type ATP synthase alpha chain, found in Clostridium botulinum (strain Loch Maree / Type A3).